The chain runs to 218 residues: Cytochrome c biogenesis ATP-binding export protein CcmA (218 aa).

An ABC transporter domain is found at 2–217 (LEAKNLTCIR…KSCLSACCAV (216 aa)). 34–41 (GPNGAGKT) is a binding site for ATP.

It belongs to the ABC transporter superfamily. CcmA exporter (TC 3.A.1.107) family. In terms of assembly, the complex is composed of two ATP-binding proteins (CcmA) and two transmembrane proteins (CcmB).

The protein resides in the cell inner membrane. It carries out the reaction heme b(in) + ATP + H2O = heme b(out) + ADP + phosphate + H(+). Its function is as follows. Part of the ABC transporter complex CcmAB involved in the biogenesis of c-type cytochromes; once thought to export heme, this seems not to be the case, but its exact role is uncertain. Responsible for energy coupling to the transport system. This Yersinia pestis protein is Cytochrome c biogenesis ATP-binding export protein CcmA.